A 547-amino-acid polypeptide reads, in one-letter code: Chaperonin GroEL (547 aa).

ATP is bound by residues 30 to 33, lysine 51, 87 to 91, glycine 415, 479 to 481, and aspartate 495; these read TLGP, DGTTT, and NAA.

This sequence belongs to the chaperonin (HSP60) family. In terms of assembly, forms a cylinder of 14 subunits composed of two heptameric rings stacked back-to-back. Interacts with the co-chaperonin GroES.

The protein localises to the cytoplasm. It catalyses the reaction ATP + H2O + a folded polypeptide = ADP + phosphate + an unfolded polypeptide.. Together with its co-chaperonin GroES, plays an essential role in assisting protein folding. The GroEL-GroES system forms a nano-cage that allows encapsulation of the non-native substrate proteins and provides a physical environment optimized to promote and accelerate protein folding. The protein is Chaperonin GroEL of Pseudomonas aeruginosa (strain UCBPP-PA14).